The chain runs to 500 residues: Probable cytosol aminopeptidase (500 aa).

The Mn(2+) site is built by lysine 262 and aspartate 267. Lysine 274 is an active-site residue. The Mn(2+) site is built by aspartate 285, aspartate 344, and glutamate 346. Residue arginine 348 is part of the active site.

This sequence belongs to the peptidase M17 family. Mn(2+) serves as cofactor.

Its subcellular location is the cytoplasm. It carries out the reaction Release of an N-terminal amino acid, Xaa-|-Yaa-, in which Xaa is preferably Leu, but may be other amino acids including Pro although not Arg or Lys, and Yaa may be Pro. Amino acid amides and methyl esters are also readily hydrolyzed, but rates on arylamides are exceedingly low.. The catalysed reaction is Release of an N-terminal amino acid, preferentially leucine, but not glutamic or aspartic acids.. In terms of biological role, presumably involved in the processing and regular turnover of intracellular proteins. Catalyzes the removal of unsubstituted N-terminal amino acids from various peptides. This chain is Probable cytosol aminopeptidase, found in Ehrlichia ruminantium (strain Welgevonden).